Consider the following 429-residue polypeptide: 3-phosphoshikimate 1-carboxyvinyltransferase (429 aa).

Lys-23, Ser-24, and Arg-28 together coordinate 3-phosphoshikimate. Lys-23 lines the phosphoenolpyruvate pocket. The phosphoenolpyruvate site is built by Gly-95 and Arg-123. Residues Ser-168, Gln-170, Asp-316, and Lys-343 each coordinate 3-phosphoshikimate. Gln-170 is a binding site for phosphoenolpyruvate. The active-site Proton acceptor is Asp-316. Residues Arg-347 and Arg-389 each coordinate phosphoenolpyruvate.

It belongs to the EPSP synthase family. Monomer.

Its subcellular location is the cytoplasm. The catalysed reaction is 3-phosphoshikimate + phosphoenolpyruvate = 5-O-(1-carboxyvinyl)-3-phosphoshikimate + phosphate. The protein operates within metabolic intermediate biosynthesis; chorismate biosynthesis; chorismate from D-erythrose 4-phosphate and phosphoenolpyruvate: step 6/7. Its function is as follows. Catalyzes the transfer of the enolpyruvyl moiety of phosphoenolpyruvate (PEP) to the 5-hydroxyl of shikimate-3-phosphate (S3P) to produce enolpyruvyl shikimate-3-phosphate and inorganic phosphate. In Bacillus thuringiensis (strain Al Hakam), this protein is 3-phosphoshikimate 1-carboxyvinyltransferase.